The chain runs to 228 residues: CMRF-35-like molecule 4 (228 aa).

The signal sequence occupies residues 1–24; sequence MIPRVIRLWLPSALFLSQVPGCVP. The Ig-like V-type domain occupies 25–126; that stretch reads LHGPSTITGA…FDGSLGFDKY (102 aa). Over 25–187 the chain is Extracellular; the sequence is LHGPSTITGA…QPRSLRSSLY (163 aa). Cys43 and Cys110 are disulfide-bonded. N-linked (GlcNAc...) asparagine glycosylation occurs at Asn90. The tract at residues 139-174 is disordered; that stretch reads PVTGSSLESGRDILESPTSSVGHTHPSVTTDDTIPA. Residues 154-170 are compositionally biased toward polar residues; sequence SPTSSVGHTHPSVTTDD. A helical membrane pass occupies residues 188–208; the sequence is FWVLVSLKLFLFLSMLGAVLW. Residues 209 to 228 are Cytoplasmic-facing; sequence VNRPQRCSGGSSSRPCYENQ.

Belongs to the CD300 family. In terms of assembly, interacts with TYROBP, HCST and FcR gamma. In terms of tissue distribution, present on the surface of mast cells, dendritic cells, peritoneal macrophages and a subset of B-cells (at protein level).

Its subcellular location is the cell membrane. Functionally, acts as an activating receptor in mast cells and macrophages. The chain is CMRF-35-like molecule 4 from Mus musculus (Mouse).